We begin with the raw amino-acid sequence, 565 residues long: Perivitellin-2 67 kDa subunit (565 aa).

The first 26 residues, methionine 1–glycine 26, serve as a signal peptide directing secretion. An MACPF domain is found at alanine 27–threonine 340. The interval valine 387 to lysine 565 is invertebrate MACPF Accessory Domain (IMAD).

As to quaternary structure, perivitellin-2 is a dimer of heterodimers held together head-to-tail by non-covalent forces. The heterodimer is composed of the tachylectin subunit (31 kDa) and the MACPF subunit (67 kDa) that are disulfide-linked. In terms of processing, PV2 is a very high density lipoprotein (VHDL). It contains 3.75% of lipids. The major lipid classes are free sterols and phospholipids and also have significant quantities of energy-providing triacylglycerides and free fatty acids. Produced by albumen secretory cells. Found in developing eggs.

It localises to the secreted. The protein resides in the target cell membrane. The egg defensive protein perivitellin-2 is a pore-forming two-subunit glycoprotein that affects both the nervous and digestive systems of mammals. In addition, it is a source of both structural and energetic molecules during embryonic development. The tachylectin subunit (31 kDa) binds target membranes while the MACPF subunit (67 kDa) disrupts lipid bilayers forming large pores (inner diameter of about 5.6 nm) altering the plasma membrance conductance. Both in vivo and in vitro, the protein shows wide pH range stability and is resistant to enzymatic proteolysis from gastrointestinal environments. It is cytotoxic to both epithelial and immune cells from the digestive system of mammals. It induces enterocyte death by a lytic mechanism and disrupts enterocyte monolayers in a dose-dependent manner. After oral administration to mice, it binds enterocytes and induces large dose-dependent morphological changes on their small intestine mucosa, reducing the absorptive surface. Additionally, it is detected in the Peyer's patches where it activates lymphoid follicles and triggers apoptosis. The toxin can also traverse the intestinal barrier and induce oral adaptive immunity with evidence of circulating antibody response. The toxin also shows hemagglutination properties thanks to the tachylectin subunit, but has no hemolytic activity. In addition to enterotoxin activity, the toxin also acts as a neurotoxin, since an intraperitoneal injection can induce paralysis of the mice rear limbs, followed by death. This chain is Perivitellin-2 67 kDa subunit, found in Pomacea maculata (Giant applesnail).